Here is a 387-residue protein sequence, read N- to C-terminus: Chaperone protein DnaJ (387 aa).

The region spanning 6–70 (DYYETLGVSR…QKRAAYDQYG (65 aa)) is the J domain. The CR-type zinc-finger motif lies at 143-225 (GKDTKISYDR…CHGTGHEQER (83 aa)). The Zn(2+) site is built by C156, C159, C173, C176, C199, C202, C213, and C216. CXXCXGXG motif repeat units follow at residues 156-163 (CHTCNGSG), 173-180 (CHKCHGSG), 199-206 (CDVCGGTG), and 213-220 (CPTCHGTG).

This sequence belongs to the DnaJ family. In terms of assembly, homodimer. Requires Zn(2+) as cofactor.

The protein localises to the cytoplasm. Functionally, participates actively in the response to hyperosmotic and heat shock by preventing the aggregation of stress-denatured proteins and by disaggregating proteins, also in an autonomous, DnaK-independent fashion. Unfolded proteins bind initially to DnaJ; upon interaction with the DnaJ-bound protein, DnaK hydrolyzes its bound ATP, resulting in the formation of a stable complex. GrpE releases ADP from DnaK; ATP binding to DnaK triggers the release of the substrate protein, thus completing the reaction cycle. Several rounds of ATP-dependent interactions between DnaJ, DnaK and GrpE are required for fully efficient folding. Also involved, together with DnaK and GrpE, in the DNA replication of plasmids through activation of initiation proteins. The chain is Chaperone protein DnaJ from Lacticaseibacillus paracasei (strain ATCC 334 / BCRC 17002 / CCUG 31169 / CIP 107868 / KCTC 3260 / NRRL B-441) (Lactobacillus paracasei).